The primary structure comprises 449 residues: Tubulin beta-6 chain (449 aa).

Residues Gln11, Glu69, Ser138, Gly142, Thr143, Gly144, Asn204, and Asn226 each coordinate GTP. Glu69 is a binding site for Mg(2+). Positions 425–449 (YQDATADDEGEYEEDEDEEEILDHE) are disordered. A compositionally biased stretch (acidic residues) spans 429–449 (TADDEGEYEEDEDEEEILDHE).

Belongs to the tubulin family. Dimer of alpha and beta chains. A typical microtubule is a hollow water-filled tube with an outer diameter of 25 nm and an inner diameter of 15 nM. Alpha-beta heterodimers associate head-to-tail to form protofilaments running lengthwise along the microtubule wall with the beta-tubulin subunit facing the microtubule plus end conferring a structural polarity. Microtubules usually have 13 protofilaments but different protofilament numbers can be found in some organisms and specialized cells. The cofactor is Mg(2+).

Its subcellular location is the cytoplasm. The protein localises to the cytoskeleton. Its function is as follows. Tubulin is the major constituent of microtubules, a cylinder consisting of laterally associated linear protofilaments composed of alpha- and beta-tubulin heterodimers. Microtubules grow by the addition of GTP-tubulin dimers to the microtubule end, where a stabilizing cap forms. Below the cap, tubulin dimers are in GDP-bound state, owing to GTPase activity of alpha-tubulin. This Arabidopsis thaliana (Mouse-ear cress) protein is Tubulin beta-6 chain (TUBB6).